A 787-amino-acid polypeptide reads, in one-letter code: MAVWIQAQQLQGDALHQMQALYGQHFPIEVRHYLSQWIEGQAWDSIDLDNPQENIKATQLLEGLVQELQKKAEHQVGEDGFLLKIKLGHYATQLQNTYDRCPMELVRCIRHILYNEQRLVREANNGTSPAGSLADAMSQKHLQINQTFEELRLVTQDTENELKKLQQTQEYFIIQYQESLRIQAQFAQLAQLNPQERLSRETALQQKQLSLEAWLQREAQTLQQYRVELAEKHQKTLQLLRKQQTIILDDELIQWKRRQQLAGNGGPPEGSLDVLQSWCEKLAEIIWQNRQQIRRAEHFCQQLPIPGPVEEMLAEVNATITDIISALVTSTFIIEKQPPQVLKTQTKFAATVRLLVGGKLNVHMNPPQVKATIISEQQAKSLLKNENTRNDYSGEILNNCCVMEYHQATGTLSAHFRNMSLKRIKRSDRRGAESVTEEKFTILFESQFSVGGNELVFQVKTLSLPVVVIVHGSQDNNATATVLWDNAFAEPGRVPFAVPDKVLWPQLCEALNMKFKAEVQSNRGLTKENLVFLAQKLFNSSSSHLEDYNGMSVSWSQFNRENLPGRNYTFWQWFDGVMEVLKKHLKPHWNDGAILGFVNKQQAHDLLINKPDGTFLLRFSDSEIGGITIAWKFDSQERMFWNLMPFTTRDFSIRSLADRLGDLSYLIYVFPDRPKDEVYSKYYTPVPCEPATAKAVDGYVKPQIKQVVPEFVSASADSAGGSATYMDQAPSPAVCPQPHYNMYPQNPDPVLDNDGDFDLDDTIDVARRVEELLGRPMDSQWIPHAQS.

Tyr-90 bears the Phosphotyrosine mark. Phosphoserine is present on Ser-128. The SH2 domain maps to 589-686 (WNDGAILGFV…EVYSKYYTPV (98 aa)). The residue at position 682 (Tyr-682) is a Phosphotyrosine. Phosphotyrosine; by HCK, JAK and PTK6 is present on Tyr-699.

Belongs to the transcription factor STAT family. Upon activation, forms a homodimer or a heterodimer with a related family member. Binds NR3C1. Interacts with NCOA1. Interacts with NMI. Interacts with SOCS7. Interacts (via SH2 domain) with INSR. Interacts with CPEB3; this inhibits STAT5B-mediated transcriptional activation. Tyrosine phosphorylated in response to signaling via activated KIT, resulting in translocation to the nucleus. Tyrosine phosphorylated in response to signaling via activated FLT3; wild-type FLT3 results in much weaker phosphorylation than constitutively activated mutant FLT3. Alternatively, can be phosphorylated by JAK2. Phosphorylation at Tyr-699 by PTK6 or HCK leads to an increase of its transcriptional activity.

It localises to the cytoplasm. Its subcellular location is the nucleus. Its function is as follows. Carries out a dual function: signal transduction and activation of transcription. Mediates cellular responses to the cytokine KITLG/SCF and other growth factors. Binds to the GAS element and activates PRL-induced transcription. Positively regulates hematopoietic/erythroid differentiation. This is Signal transducer and activator of transcription 5B (STAT5B) from Bos taurus (Bovine).